The chain runs to 223 residues: PKHD-type hydroxylase CPS_3426 (223 aa).

The region spanning Lys-77 to Ser-175 is the Fe2OG dioxygenase domain. Positions 96, 98, and 156 each coordinate Fe cation. A 2-oxoglutarate-binding site is contributed by Arg-166.

Fe(2+) serves as cofactor. The cofactor is L-ascorbate.

The sequence is that of PKHD-type hydroxylase CPS_3426 from Colwellia psychrerythraea (strain 34H / ATCC BAA-681) (Vibrio psychroerythus).